Here is a 270-residue protein sequence, read N- to C-terminus: Non-structural maintenance of chromosomes element 1 homolog (270 aa).

Residues 185–226 (CNVCHKIAIQCQLCENCGIPLHLQCAGIYFRGIANPLCPNCK) form an RING-type; atypical zinc finger. Positions 236 to 270 (LSQVSSQGPSHSQAAPVRGRNQRSRNISTVARTSR) are disordered. Polar residues-rich tracts occupy residues 237–248 (SQVSSQGPSHSQ) and 259–270 (SRNISTVARTSR).

This sequence belongs to the NSE1 family. In terms of assembly, component of the SMC5-SMC6 complex.

It localises to the nucleus. It is found in the chromosome. Its subcellular location is the telomere. The enzyme catalyses S-ubiquitinyl-[E2 ubiquitin-conjugating enzyme]-L-cysteine + [acceptor protein]-L-lysine = [E2 ubiquitin-conjugating enzyme]-L-cysteine + N(6)-ubiquitinyl-[acceptor protein]-L-lysine.. Its function is as follows. RING-type zinc finger-containing E3 ubiquitin ligase that assembles with melanoma antigen protein (MAGE) to catalyze the direct transfer of ubiquitin from E2 ubiquitin-conjugating enzyme to a specific substrate. Within MAGE-RING ubiquitin ligase complex, MAGE stimulates and specifies ubiquitin ligase activity likely through recruitment and/or stabilization of the E2 ubiquitin-conjugating enzyme at the E3:substrate complex. Involved in maintenance of genome integrity, DNA damage response and DNA repair. This Xenopus tropicalis (Western clawed frog) protein is Non-structural maintenance of chromosomes element 1 homolog (nsmce1).